Here is a 491-residue protein sequence, read N- to C-terminus: Cytochrome P450 2F3 (491 aa).

Cys-436 contacts heme.

This sequence belongs to the cytochrome P450 family. The cofactor is heme. Lung specific.

The protein localises to the endoplasmic reticulum membrane. The protein resides in the microsome membrane. It carries out the reaction an organic molecule + reduced [NADPH--hemoprotein reductase] + O2 = an alcohol + oxidized [NADPH--hemoprotein reductase] + H2O + H(+). Bioactivates 3-methylindole (3MI) by dehydrogenation to the putative electrophile 3-methylene-indolenine. Stereoselectively catalyzes the formation of the 1R,2S-oxide from naphthalene. Lack activity with other common P450 substrates including 7-ethoxycoumarin. In Capra hircus (Goat), this protein is Cytochrome P450 2F3 (CYP2F3).